The following is a 212-amino-acid chain: Nitrile hydratase subunit beta (212 aa).

It belongs to the nitrile hydratase subunit beta family. Heterodimer of an alpha and a beta chain.

The catalysed reaction is an aliphatic primary amide = an aliphatic nitrile + H2O. Its function is as follows. NHase catalyzes the hydration of various nitrile compounds to the corresponding amides. This chain is Nitrile hydratase subunit beta (nthB), found in Rhodococcus erythropolis (Arthrobacter picolinophilus).